A 273-amino-acid chain; its full sequence is Oxidized low-density lipoprotein receptor 1 (273 aa).

The tract at residues M1–K22 is disordered. Over M1–C36 the chain is Cytoplasmic. S-palmitoyl cysteine attachment occurs at residues C36 and C46. The chain crosses the membrane as a helical; Signal-anchor for type II membrane protein span at residues L37–G57. Positions M58–W150 are neck. The Extracellular portion of the chain corresponds to M58–Q273. Positions S64 to L123 form a coiled coil. N73 carries N-linked (GlcNAc...) asparagine glycosylation. N139 carries an N-linked (GlcNAc...) (complex) asparagine glycan. Intrachain disulfides connect C144–C155, C172–C264, and C243–C256. One can recognise a C-type lectin domain in the interval H151–Q265.

Homodimer; disulfide-linked. May form a hexamer composed of 3 homodimers. Interacts with HSP70. As to quaternary structure, (Microbial infection) Binds to the head and beginning of the coiled stalk of N.meningitidis adhesin A (nadA) variant 3; binding can be abrogated by monoclonal antibodies against the specific regions of NadA. Binding occurs in protein microarrays, in solution and when LOX-1 is expressed on the cell surface. The intrachain disulfide-bonds prevent N-glycosylation at some sites. In terms of processing, N-glycosylated. Expressed at high level in endothelial cells and vascular-rich organs such as placenta, lung, liver and brain, aortic intima, bone marrow, spinal cord and substantia nigra. Also expressed at the surface of dendritic cells. Widely expressed at intermediate and low level.

Its subcellular location is the cell membrane. The protein resides in the membrane raft. It is found in the secreted. Receptor that mediates the recognition, internalization and degradation of oxidatively modified low density lipoprotein (oxLDL) by vascular endothelial cells. OxLDL is a marker of atherosclerosis that induces vascular endothelial cell activation and dysfunction, resulting in pro-inflammatory responses, pro-oxidative conditions and apoptosis. Its association with oxLDL induces the activation of NF-kappa-B through an increased production of intracellular reactive oxygen and a variety of pro-atherogenic cellular responses including a reduction of nitric oxide (NO) release, monocyte adhesion and apoptosis. In addition to binding oxLDL, it acts as a receptor for the HSP70 protein involved in antigen cross-presentation to naive T-cells in dendritic cells, thereby participating in cell-mediated antigen cross-presentation. Also involved in inflammatory process, by acting as a leukocyte-adhesion molecule at the vascular interface in endotoxin-induced inflammation. Also acts as a receptor for advanced glycation end (AGE) products, activated platelets, monocytes, apoptotic cells and both Gram-negative and Gram-positive bacteria. Functionally, (Microbial infection) May serve as a receptor for adhesin A variant 3 (nadA) of N.meningitidis. The polypeptide is Oxidized low-density lipoprotein receptor 1 (OLR1) (Homo sapiens (Human)).